Here is a 186-residue protein sequence, read N- to C-terminus: Methylamine dehydrogenase light chain (186 aa).

Residues 1-57 constitute a signal peptide (tat-type signal); it reads MKKNTGFDSGIEKLARKTASKTGRRSFIGKLGGFLVGSALLPLLPVDRRGRMNEAHA. 6 disulfide bridges follow: Cys78–Cys143, Cys84–Cys116, Cys91–Cys176, Cys93–Cys141, Cys101–Cys132, and Cys133–Cys164. Trp112 carries the post-translational modification Tryptophylquinone. Positions 112–163 form a cross-link, tryptophan tryptophylquinone (Trp-Trp); that stretch reads WVASCFNPGDGQTYLIAYRDCCGKQTCGRCNCVNVQGELPVYRPEFNNDIVW.

The protein belongs to the aromatic amine dehydrogenase light chain family. As to quaternary structure, heterotetramer of two light and two heavy chains. Tryptophan tryptophylquinone residue is required as a cofactor. In terms of processing, predicted to be exported by the Tat system. The position of the signal peptide cleavage has not been experimentally proven. Tryptophan tryptophylquinone (TTQ) is formed by oxidation of the indole ring of a tryptophan to form tryptophylquinone followed by covalent cross-linking with another tryptophan residue.

It is found in the periplasm. The enzyme catalyses 2 oxidized [amicyanin] + methylamine + H2O = 2 reduced [amicyanin] + formaldehyde + NH4(+) + 2 H(+). The protein operates within one-carbon metabolism; methylamine degradation; formaldehyde from methylamine: step 1/1. Methylamine dehydrogenase carries out the oxidation of methylamine. Electrons are passed from methylamine dehydrogenase to amicyanin. The protein is Methylamine dehydrogenase light chain (mauA) of Methylobacillus flagellatus (strain ATCC 51484 / DSM 6875 / VKM B-1610 / KT).